The following is a 1055-amino-acid chain: Error-prone DNA polymerase (1055 aa).

It belongs to the DNA polymerase type-C family. DnaE2 subfamily.

Its subcellular location is the cytoplasm. It carries out the reaction DNA(n) + a 2'-deoxyribonucleoside 5'-triphosphate = DNA(n+1) + diphosphate. Its function is as follows. DNA polymerase involved in damage-induced mutagenesis and translesion synthesis (TLS). It is not the major replicative DNA polymerase. The sequence is that of Error-prone DNA polymerase from Corynebacterium glutamicum (strain ATCC 13032 / DSM 20300 / JCM 1318 / BCRC 11384 / CCUG 27702 / LMG 3730 / NBRC 12168 / NCIMB 10025 / NRRL B-2784 / 534).